A 186-amino-acid polypeptide reads, in one-letter code: uncharacterized protein (186 aa).

This is an uncharacterized protein from Trypanosoma brucei brucei.